The chain runs to 980 residues: Peroxisomal ATPase PEX6 (980 aa).

Arg119 carries the omega-N-methylarginine modification. Residues 470 to 477 (GPPGCGKT) and 744 to 751 (GPPGTGKT) contribute to the ATP site.

The protein belongs to the AAA ATPase family. As to quaternary structure, interacts with PEX1; forming the PEX1-PEX6 AAA ATPase complex, which is composed of a heterohexamer formed by a trimer of PEX1-PEX6 dimers. Interacts with PEX26; interaction is direct and promotes recruitment to peroxisomal membranes. Interacts with ZFAND6. Expressed in the retina, at higher levels in the photoreceptor layer at the joint between the outer and inner segments.

The protein resides in the cytoplasm. It is found in the cytosol. Its subcellular location is the peroxisome membrane. It localises to the cell projection. The protein localises to the cilium. The protein resides in the photoreceptor outer segment. It carries out the reaction ATP + H2O = ADP + phosphate + H(+). In terms of biological role, component of the PEX1-PEX6 AAA ATPase complex, a protein dislocase complex that mediates the ATP-dependent extraction of the PEX5 receptor from peroxisomal membranes, an essential step for PEX5 recycling. Specifically recognizes PEX5 monoubiquitinated at 'Cys-11', and pulls it out of the peroxisome lumen through the PEX2-PEX10-PEX12 retrotranslocation channel. Extraction by the PEX1-PEX6 AAA ATPase complex is accompanied by unfolding of the TPR repeats and release of bound cargo from PEX5. In Homo sapiens (Human), this protein is Peroxisomal ATPase PEX6.